We begin with the raw amino-acid sequence, 20 residues long: Unknown protein NF003 from 2D-PAGE (20 aa).

The polypeptide is Unknown protein NF003 from 2D-PAGE (Naegleria fowleri (Brain eating amoeba)).